Reading from the N-terminus, the 406-residue chain is ATPase ASNA1 homolog (406 aa).

ATP is bound at residue lysine 21–threonine 28. Residue aspartate 62 is part of the active site. Residues glutamate 300 and asparagine 327 each coordinate ATP. Zn(2+) contacts are provided by cysteine 339 and cysteine 342.

This sequence belongs to the arsA ATPase family. As to quaternary structure, homodimer.

The protein localises to the cytoplasm. Its subcellular location is the endoplasmic reticulum. In terms of biological role, ATPase required for the post-translational delivery of tail-anchored (TA) proteins to the endoplasmic reticulum. Recognizes and selectively binds the transmembrane domain of TA proteins in the cytosol. This complex then targets to the endoplasmic reticulum by membrane-bound receptors, where the tail-anchored protein is released for insertion. This process is regulated by ATP binding and hydrolysis. ATP binding drives the homodimer towards the closed dimer state, facilitating recognition of newly synthesized TA membrane proteins. ATP hydrolysis is required for insertion. Subsequently, the homodimer reverts towards the open dimer state, lowering its affinity for the membrane-bound receptor, and returning it to the cytosol to initiate a new round of targeting. This is ATPase ASNA1 homolog from Leishmania braziliensis.